The following is a 67-amino-acid chain: Type 3 secretion system chaperone PscE (67 aa).

Positions 16–37 (HAAALRQRLQAALAECRRELAR) form a coiled coil.

This sequence belongs to the YscE family. As to quaternary structure, forms a stable ternary complex with PscF/SctF and PscG within the cytoplasm. Co-stabilized by PscG.

It is found in the cytoplasm. In terms of biological role, chaperone of the type III secretion system (T3SS), also called injectisome, which is used to inject bacterial effector proteins into eukaryotic host cells, facilitating the establishment and dissemination of infection. Along with PscG, prevents premature polymerization of the PscF/SctF needle protein within the cytoplasm. Required for type III secretion needle assembly. Also required for cytotoxicity by influencing PscF/SctF levels. The chain is Type 3 secretion system chaperone PscE (pscE) from Pseudomonas aeruginosa (strain ATCC 15692 / DSM 22644 / CIP 104116 / JCM 14847 / LMG 12228 / 1C / PRS 101 / PAO1).